A 170-amino-acid chain; its full sequence is Macro domain-containing protein VPA0103 (170 aa).

One can recognise a Macro domain in the interval 1 to 170; that stretch reads MNAISLVQGD…SIWQHALTQH (170 aa).

This sequence belongs to the MacroD-type family.

This Vibrio parahaemolyticus serotype O3:K6 (strain RIMD 2210633) protein is Macro domain-containing protein VPA0103.